We begin with the raw amino-acid sequence, 177 residues long: Flavodoxin (177 aa).

The Flavodoxin-like domain occupies 4–173 (IGIFFGSDTG…RIDTWLDKLK (170 aa)).

This sequence belongs to the flavodoxin family. The cofactor is FMN.

In terms of biological role, low-potential electron donor to a number of redox enzymes. NifF is the electron donor to nitrogenase. This chain is Flavodoxin (nifF), found in Enterobacter agglomerans (Erwinia herbicola).